The following is a 418-amino-acid chain: Acyltransferase calJ (418 aa).

Residue serine 79 is the Acyl-ester intermediate of the active site. Substrate is bound by residues arginine 176 and tyrosine 191.

The protein belongs to the class-A beta-lactamase family.

Its pathway is secondary metabolite biosynthesis. In terms of biological role, acyltransferase; part of the gene cluster that mediates the biosynthesis of calbistrin A and related compounds. Calbistrin A is a secondary metabolite with an interesting structure that was recently found to have bioactivity against leukemia cells. It consists of two polyketides linked by an ester bond: a bicyclic decalin containing polyketide and a linear 12 carbon dioic acid structure. The polyketide synthase calA is probably responsible for forming the decalin moiety. Because calA lacks a designated enoylreductase (ER) domain, the required activity is provided by the trans-enoyl reductase calK. Following release from the PKS, calF then probably catalyzes the oxidation and the subsequent Diels Alder cycloisomerization that lead to the formation of the decalin moiety. The decalin polyketide backbone includes two C-methyl groups, at C7 and C11 in backbone, of which the C7 position is probably methylated by the methyltransferase domain of calA. A candidate for adding the methyl group at C11, if not done by CalA, is the cluster methyltransferase calH. Several additional tailoring enzymes within the cluster could be involved in the modification of the decalin polyketide product. Those include the 3 cytochrome P450 monooxygenases CalE, CalG and CalL, of which one might be responsible for the introduction of the extra hydroxyl group attached to the backbone of the decalin moiety, at position C9 in the backbone, that allows for attachment of the linear moiety. One tailoring enzyme activity that is expected to be involved in biosynthesis of calbistrin is an acyltransferase for connecting the two polyketide synthase products, and which could be performed by the cluster acyltransferase calJ. The enzyme responsible for the biosynthesis of the linear moiety, probably a second PKS, has not been identified yet. The sequence is that of Acyltransferase calJ from Penicillium decumbens.